A 469-amino-acid chain; its full sequence is Putative multidrug resistance protein MdtD (469 aa).

13 consecutive transmembrane segments (helical) span residues 8 to 28, 45 to 65, 68 to 88, 102 to 122, 134 to 154, 161 to 181, 191 to 211, 215 to 235, 263 to 283, 286 to 306, 338 to 358, 392 to 412, and 426 to 446; these read LWIVAFGFFMQTLDTTIVNTA, SVIVSYVLTVAVMLPASGWLA, VGVKWVFFSAIILFTLGSLLC, VIQGIGGAMMVPVGRLTVMKI, FVTLPGQIGPLVGPALGGFLV, WIFLINLPVGVVGALATLWLM, FDISGFIMLAIGMATLTLALD, GLGLPPLAIAGLILCGILALA, LIGSMSARIGSGMLPFMTPVF, IGLGFTPFHAGLMMIPMIIGS, LSFPLVALMGWTLLLPIVLFF, MVMQLSMSLGVSTAGILLGVF, and SAFLYSYICMAIIIALPALIF.

It belongs to the major facilitator superfamily. TCR/Tet family.

Its subcellular location is the cell inner membrane. This chain is Putative multidrug resistance protein MdtD, found in Yersinia enterocolitica serotype O:8 / biotype 1B (strain NCTC 13174 / 8081).